Reading from the N-terminus, the 201-residue chain is Cerebellin-4 (201 aa).

The first 27 residues, 1-27 (MGSGRRALSAVPAVLLVLTLPGLPVWA), serve as a signal peptide directing secretion. Residues N29 and N88 are each glycosylated (N-linked (GlcNAc...) asparagine). The C1q domain occupies 66 to 201 (AANSKVAFSA…TFSGFLVFPL (136 aa)).

In terms of assembly, homohexamer; disulfide-linked homotrimers. The trimers are assembled via the globular C1q domains. The trimers associate via N-terminal cysteine residues to form disulfide-linked hexamers. May form oligomers with CBLN1, CBLN2 and CBLN3 prior to secretion. Strongly interacts with DCC in a NTN1-displaceable fashion. Weakly binds to NRXN1 and NRXN2 long and short isoforms produced by alternative promoter usage. Interaction with NRXN3 short isoform is hardly detectable; no interaction at all with NRXN3 long isoform. In terms of processing, sialoglycoprotein.

It is found in the secreted. It localises to the synapse. In terms of biological role, acts as a synaptic organizer in specific subsets of neurons in the brain. Essential for the formation and maintenance of inhibitory GABAergic synapses. Promotes the development of dendrite-targeting inhibitory GABAergic synapses made by somatostatin-positive interneurons. May contribute to the function of ventral medial habenula region of the brain implicated in the regulation of anxiety-related behaviors. May play a role in CBLN3 export from the endoplasmic reticulum and secretion. The polypeptide is Cerebellin-4 (CBLN4) (Homo sapiens (Human)).